A 307-amino-acid polypeptide reads, in one-letter code: Acetaldehyde dehydrogenase 1 (307 aa).

Catalysis depends on cysteine 132, which acts as the Acyl-thioester intermediate. Residues 163-171 and asparagine 274 each bind NAD(+); that span reads SVGPGTRKN.

Belongs to the acetaldehyde dehydrogenase family.

The enzyme catalyses acetaldehyde + NAD(+) + CoA = acetyl-CoA + NADH + H(+). In Comamonas testosteroni (Pseudomonas testosteroni), this protein is Acetaldehyde dehydrogenase 1 (tesF).